A 218-amino-acid polypeptide reads, in one-letter code: Cytochrome c biogenesis ATP-binding export protein CcmA (218 aa).

One can recognise an ABC transporter domain in the interval 12–217; it reads LHAEQLSSIR…KLSLEYRGEV (206 aa). Residue 44–51 participates in ATP binding; sequence GPNGAGKS.

It belongs to the ABC transporter superfamily. CcmA exporter (TC 3.A.1.107) family. In terms of assembly, the complex is composed of two ATP-binding proteins (CcmA) and two transmembrane proteins (CcmB).

The protein localises to the cell inner membrane. The catalysed reaction is heme b(in) + ATP + H2O = heme b(out) + ADP + phosphate + H(+). Its function is as follows. Part of the ABC transporter complex CcmAB involved in the biogenesis of c-type cytochromes; once thought to export heme, this seems not to be the case, but its exact role is uncertain. Responsible for energy coupling to the transport system. In Idiomarina loihiensis (strain ATCC BAA-735 / DSM 15497 / L2-TR), this protein is Cytochrome c biogenesis ATP-binding export protein CcmA.